A 159-amino-acid polypeptide reads, in one-letter code: uncharacterized protein (159 aa).

3 consecutive transmembrane segments (helical) span residues 17–37, 44–64, and 67–87; these read FFFF…NLSS, WLIV…PLPI, and FSGA…DLIA.

The protein resides in the membrane. This is an uncharacterized protein from Saccharomyces cerevisiae (strain ATCC 204508 / S288c) (Baker's yeast).